Here is a 409-residue protein sequence, read N- to C-terminus: MGRDILIGFVGKPSSGKSTMLNALTDATAKTGNFPFTTIEPNRAIGYAQIECACSRFGLQDKCKPIYGGCKNGVRSIPIQLLDVAGLIPGAHAGKGLGNKFLDDLRHADALVHVVDVSGTTDAEGKVCRGYDPSVDIAWLYKEITAWIGNNLREKWPNIVRRHIATKANPVNTLQSQFSGYGSTPAVTAKVLDSLHLDTPLEKWDDDTIEKVVNRFVDIKFPTVIALNKIDHPDADANISKIARKEDPNRLVLASAISEVFLRRLAKQGFVKYEEGSEFVDTLDDFPDSGLKPLSENLKTRIADLQDMVLFRHGSTGVCNVLAKAMELLNLIPVFPVKNVHNFANSPNEGVFRDCILVKQGTTAGQVSQMVLGGEAMSIVGVNGNVGESDVIVPGKTDILHFRLRKAEA.

The 270-residue stretch at 5–274 (ILIGFVGKPS…LAKQGFVKYE (270 aa)) folds into the OBG-type G domain. GTP-binding positions include 11–18 (GKPSSGKS) and 83–87 (DVAGL).

The protein belongs to the TRAFAC class OBG-HflX-like GTPase superfamily. OBG GTPase family.

The protein localises to the cytoplasm. Its subcellular location is the nucleus. This is an uncharacterized protein from Schizosaccharomyces pombe (strain 972 / ATCC 24843) (Fission yeast).